A 152-amino-acid chain; its full sequence is Em-like protein GEA1 (152 aa).

Basic and acidic residues-rich tracts occupy residues 1–17 and 32–63; these read MASK…KAKQ and EAQE…IGHK. Residues 1–63 are disordered; that stretch reads MASKQLSREE…HEGYQEIGHK (63 aa). A run of 4 repeats spans residues 44–63, 64–83, 84–103, and 104–123. The tract at residues 44–123 is 4 X 20 AA tandem repeats; the sequence is GGQTRKEQLG…HEGYKEMGRK (80 aa). A disordered region spans residues 116–152; that stretch reads GYKEMGRKGGLSTMEKSGGERAEEEGIEIDESKFTNK.

It belongs to the small hydrophilic plant seed protein family. In terms of tissue distribution, in seeds only. Specifically located to vascular bundles in the cotyledon and axis of the dry seed. Also found in the epiderm and outer layers of the cortex in the embryo axis.

Its function is as follows. It is thought to provide protection for the cytoplasm during the desiccation stage of embryo development. The chain is Em-like protein GEA1 (EM1) from Arabidopsis thaliana (Mouse-ear cress).